Reading from the N-terminus, the 318-residue chain is D-alanine--D-alanine ligase (318 aa).

The ATP-grasp domain maps to 116–311 (KQVWQSLGIP…FQQLVLAILA (196 aa)). Residue 142–197 (STELGFPLIVKPAHEGSSIGMAKVNSAQELVAAWQDAAKYDSQVLVEQWIHGPEFT) coordinates ATP. Positions 265, 278, and 280 each coordinate Mg(2+).

This sequence belongs to the D-alanine--D-alanine ligase family. Mg(2+) is required as a cofactor. Mn(2+) serves as cofactor.

The protein resides in the cytoplasm. It carries out the reaction 2 D-alanine + ATP = D-alanyl-D-alanine + ADP + phosphate + H(+). It functions in the pathway cell wall biogenesis; peptidoglycan biosynthesis. Cell wall formation. This is D-alanine--D-alanine ligase from Pseudomonas putida (strain GB-1).